We begin with the raw amino-acid sequence, 371 residues long: NADP-dependent oxidoreductase lnaE (371 aa).

Residues 172–175 (DEIG), lysine 198, tyrosine 214, asparagine 237, 277–283 (YGTIAEQ), and 307–309 (FGL) contribute to the NADP(+) site.

Belongs to the NADP-dependent oxidoreductase L4BD family.

The protein operates within secondary metabolite biosynthesis. Functionally, NADP-dependent oxidoreductase; part of the lna gene cluster that mediates the biosynthesis of diastereomeric piperazines. Lna and lnb clusters encode sets of enzymes that produce overlapping sets of previously undescribed metabolites such as piperazinomycin-like metabolites or morpholine. The lna and lnb biosynthetic pathways appear to be part of a signaling network that controls the formation of sclerotia, a resilient overwintering structure. One primary function of the non-canonical nonribosomal peptide synthetases lnaA and lnbA consists in the reduction of L-tyrosine. The presence in the clusters of tailoring enzymes such as the oxidoreductases lnaB, lnbB, lnaE or lnbE, as well as of the cytochrome P450 monooxygenases lnaC, lnaD, or lnbC, might explain formation of various diastereomeric piperazines. The chain is NADP-dependent oxidoreductase lnaE from Aspergillus flavus (strain ATCC 200026 / FGSC A1120 / IAM 13836 / NRRL 3357 / JCM 12722 / SRRC 167).